A 678-amino-acid chain; its full sequence is DNA ligase (678 aa).

NAD(+) contacts are provided by residues 47–51, 96–97, and Glu-122; these read DSDYD and SL. The active-site N6-AMP-lysine intermediate is the Lys-124. Positions 145, 182, 300, and 324 each coordinate NAD(+). The Zn(2+) site is built by Cys-418, Cys-421, Cys-436, and Cys-442. The region spanning 602–678 is the BRCT domain; the sequence is AYNESFTGKT…ILEDNLKDLL (77 aa).

The protein belongs to the NAD-dependent DNA ligase family. LigA subfamily. Mg(2+) serves as cofactor. The cofactor is Mn(2+).

The enzyme catalyses NAD(+) + (deoxyribonucleotide)n-3'-hydroxyl + 5'-phospho-(deoxyribonucleotide)m = (deoxyribonucleotide)n+m + AMP + beta-nicotinamide D-nucleotide.. Functionally, DNA ligase that catalyzes the formation of phosphodiester linkages between 5'-phosphoryl and 3'-hydroxyl groups in double-stranded DNA using NAD as a coenzyme and as the energy source for the reaction. It is essential for DNA replication and repair of damaged DNA. The chain is DNA ligase from Francisella tularensis subsp. tularensis (strain SCHU S4 / Schu 4).